Here is a 175-residue protein sequence, read N- to C-terminus: Adenine phosphoribosyltransferase (175 aa).

This sequence belongs to the purine/pyrimidine phosphoribosyltransferase family. As to quaternary structure, homodimer.

Its subcellular location is the cytoplasm. It catalyses the reaction AMP + diphosphate = 5-phospho-alpha-D-ribose 1-diphosphate + adenine. It participates in purine metabolism; AMP biosynthesis via salvage pathway; AMP from adenine: step 1/1. Catalyzes a salvage reaction resulting in the formation of AMP, that is energically less costly than de novo synthesis. The protein is Adenine phosphoribosyltransferase of Oenococcus oeni (strain ATCC BAA-331 / PSU-1).